The chain runs to 471 residues: 3-isopropylmalate dehydratase large subunit (471 aa).

The [4Fe-4S] cluster site is built by Cys347, Cys407, and Cys410.

The protein belongs to the aconitase/IPM isomerase family. LeuC type 1 subfamily. Heterodimer of LeuC and LeuD. [4Fe-4S] cluster serves as cofactor.

It carries out the reaction (2R,3S)-3-isopropylmalate = (2S)-2-isopropylmalate. The protein operates within amino-acid biosynthesis; L-leucine biosynthesis; L-leucine from 3-methyl-2-oxobutanoate: step 2/4. In terms of biological role, catalyzes the isomerization between 2-isopropylmalate and 3-isopropylmalate, via the formation of 2-isopropylmaleate. This is 3-isopropylmalate dehydratase large subunit from Vibrio parahaemolyticus serotype O3:K6 (strain RIMD 2210633).